Reading from the N-terminus, the 131-residue chain is Profilin-3 (131 aa).

It belongs to the profilin family. In terms of assembly, occurs in many kinds of cells as a complex with monomeric actin in a 1:1 ratio.

Its subcellular location is the cytoplasm. The protein localises to the cytoskeleton. Binds to actin and affects the structure of the cytoskeleton. At high concentrations, profilin prevents the polymerization of actin, whereas it enhances it at low concentrations. By binding to PIP2, it inhibits the formation of IP3 and DG. This chain is Profilin-3, found in Lilium longiflorum (Trumpet lily).